Reading from the N-terminus, the 246-residue chain is UDP-N-acetyl-D-mannosaminuronic acid transferase (246 aa).

It belongs to the glycosyltransferase 26 family.

It carries out the reaction UDP-N-acetyl-alpha-D-mannosaminouronate + N-acetyl-alpha-D-glucosaminyl-di-trans,octa-cis-undecaprenyl diphosphate = beta-D-ManNAcA-(1-&gt;4)-alpha-D-GlcNAc-di-trans,octa-cis-undecaprenyl diphosphate + UDP + H(+). It functions in the pathway bacterial outer membrane biogenesis; enterobacterial common antigen biosynthesis. Functionally, catalyzes the synthesis of Und-PP-GlcNAc-ManNAcA (Lipid II), the second lipid-linked intermediate involved in enterobacterial common antigen (ECA) synthesis. This Salmonella arizonae (strain ATCC BAA-731 / CDC346-86 / RSK2980) protein is UDP-N-acetyl-D-mannosaminuronic acid transferase.